A 133-amino-acid polypeptide reads, in one-letter code: Ribosome-binding factor A (133 aa).

It belongs to the RbfA family. As to quaternary structure, monomer. Binds 30S ribosomal subunits, but not 50S ribosomal subunits or 70S ribosomes.

The protein resides in the cytoplasm. One of several proteins that assist in the late maturation steps of the functional core of the 30S ribosomal subunit. Associates with free 30S ribosomal subunits (but not with 30S subunits that are part of 70S ribosomes or polysomes). Required for efficient processing of 16S rRNA. May interact with the 5'-terminal helix region of 16S rRNA. This Psychromonas ingrahamii (strain DSM 17664 / CCUG 51855 / 37) protein is Ribosome-binding factor A.